The sequence spans 94 residues: DNA-directed RNA polymerase subunit omega (94 aa).

This sequence belongs to the RNA polymerase subunit omega family. Consists of a sigma factor and the RNAP core enzyme which is composed of 2 alpha chains, 1 beta chain, 1 beta' chain and 1 subunit omega.

It carries out the reaction RNA(n) + a ribonucleoside 5'-triphosphate = RNA(n+1) + diphosphate. In terms of biological role, promotes RNA polymerase assembly. Latches the N- and C-terminal regions of the beta' subunit thereby facilitating its interaction with the beta and alpha subunits. The protein is DNA-directed RNA polymerase subunit omega of Shewanella violacea (strain JCM 10179 / CIP 106290 / LMG 19151 / DSS12).